The sequence spans 631 residues: FAST kinase domain-containing protein 4 (631 aa).

The N-terminal 107 residues, Met1–Leu107, are a transit peptide targeting the mitochondrion. Ser553 is subject to Phosphoserine. In terms of domain architecture, RAP spans Leu561–Asp619.

The protein belongs to the FAST kinase family. In terms of tissue distribution, ubiquitously expressed. Expression detected in spleen, thymus, testis, ovary, colon, heart, smooth muscle, kidney, brain, lung, liver and white adipose tissue with highest expression in smooth muscle.

The protein resides in the mitochondrion matrix. Functionally, plays a role in processing of mitochondrial RNA precursors and in stabilization of a subset of mature mitochondrial RNA species, such as MT-CO1, MT-CO2, MT-CYB, MT-CO3, MT-ND3, MT-ND5 and MT-ATP8/6. May play a role in cell cycle progression. The sequence is that of FAST kinase domain-containing protein 4 from Homo sapiens (Human).